A 161-amino-acid polypeptide reads, in one-letter code: Phosphopantetheine adenylyltransferase (161 aa).

Ser-11 is a binding site for substrate. ATP is bound by residues 11–12 and His-19; that span reads SF. Substrate is bound by residues Lys-43, Leu-75, and Arg-89. Residues 90–92, Glu-100, and 125–131 contribute to the ATP site; these read GLR and YSFISSS.

It belongs to the bacterial CoaD family. As to quaternary structure, homohexamer. Requires Mg(2+) as cofactor.

It localises to the cytoplasm. The catalysed reaction is (R)-4'-phosphopantetheine + ATP + H(+) = 3'-dephospho-CoA + diphosphate. Its pathway is cofactor biosynthesis; coenzyme A biosynthesis; CoA from (R)-pantothenate: step 4/5. Its function is as follows. Reversibly transfers an adenylyl group from ATP to 4'-phosphopantetheine, yielding dephospho-CoA (dPCoA) and pyrophosphate. The polypeptide is Phosphopantetheine adenylyltransferase (Staphylococcus carnosus (strain TM300)).